Reading from the N-terminus, the 678-residue chain is SPS-sensor component PTR3 (678 aa).

Disordered stretches follow at residues 111-158 and 179-211; these read TGQG…SDPT and ANTE…SSLL. A compositionally biased stretch (low complexity) spans 127 to 144; that stretch reads TSPSSSSLSLTPSRSSST. Over residues 149-158 the composition is skewed to basic and acidic residues; it reads ADNKTLSDPT. Polar residues predominate over residues 179–194; that stretch reads ANTEVGSDHPLTTGTT.

As to quaternary structure, homodimer. Component of the plasma membrane SPS (SSY1-PTR3-SSY5) amino acid sensor complex. Interacts directly with SSY1 and SSY5. Hyperphosphorylated in response to extracellular amino acids and dependent on the amino acid sensor component SSY1. Phosphorylation is positively regulated by casein kinases YCK1 and YCK2, and negatively regulated by phosphatase PP2A regulatory subunit RTS1.

Its subcellular location is the cell membrane. Component of the SPS-sensor system, which regulates the expression of several amino acid-metabolizing enzymes and amino acid- and peptide-permeases in response to extracellular amino acid levels by controlling the activity of two transcription factors, STP1 and STP2. The polypeptide is SPS-sensor component PTR3 (PTR3) (Saccharomyces cerevisiae (strain ATCC 204508 / S288c) (Baker's yeast)).